Reading from the N-terminus, the 285-residue chain is Formamidopyrimidine-DNA glycosylase (285 aa).

Residue proline 2 is the Schiff-base intermediate with DNA of the active site. Catalysis depends on glutamate 3, which acts as the Proton donor. Residue lysine 61 is the Proton donor; for beta-elimination activity of the active site. DNA-binding residues include histidine 102, arginine 121, and lysine 163. An FPG-type zinc finger spans residues 249 to 283 (NAYGQAGKPCARCGTPIARETFMNRGSHFCNRCQK). The active-site Proton donor; for delta-elimination activity is arginine 273.

The protein belongs to the FPG family. Monomer. Requires Zn(2+) as cofactor.

The catalysed reaction is Hydrolysis of DNA containing ring-opened 7-methylguanine residues, releasing 2,6-diamino-4-hydroxy-5-(N-methyl)formamidopyrimidine.. It carries out the reaction 2'-deoxyribonucleotide-(2'-deoxyribose 5'-phosphate)-2'-deoxyribonucleotide-DNA = a 3'-end 2'-deoxyribonucleotide-(2,3-dehydro-2,3-deoxyribose 5'-phosphate)-DNA + a 5'-end 5'-phospho-2'-deoxyribonucleoside-DNA + H(+). Involved in base excision repair of DNA damaged by oxidation or by mutagenic agents. Acts as a DNA glycosylase that recognizes and removes damaged bases. Has a preference for oxidized purines, such as 7,8-dihydro-8-oxoguanine (8-oxoG). Has AP (apurinic/apyrimidinic) lyase activity and introduces nicks in the DNA strand. Cleaves the DNA backbone by beta-delta elimination to generate a single-strand break at the site of the removed base with both 3'- and 5'-phosphates. The protein is Formamidopyrimidine-DNA glycosylase of Corynebacterium efficiens (strain DSM 44549 / YS-314 / AJ 12310 / JCM 11189 / NBRC 100395).